The primary structure comprises 487 residues: V-type proton ATPase subunit B3 (487 aa).

The protein belongs to the ATPase alpha/beta chains family. V-ATPase is a heteromultimeric enzyme composed of a peripheral catalytic V1 complex (components A to H) attached to an integral membrane V0 proton pore complex (components: a, c, c'', d and e).

Its subcellular location is the vacuole membrane. Functionally, non-catalytic subunit of the peripheral V1 complex of vacuolar ATPase. V-ATPase is responsible for acidifying a variety of intracellular compartments in eukaryotic cells. This chain is V-type proton ATPase subunit B3 (VHA-B3), found in Arabidopsis thaliana (Mouse-ear cress).